Here is a 249-residue protein sequence, read N- to C-terminus: Probable cobalt-factor III C(17)-methyltransferase (249 aa).

This sequence belongs to the precorrin methyltransferase family.

The catalysed reaction is Co(II)-factor III + S-adenosyl-L-methionine + H(+) = Co(II)-factor IV + S-adenosyl-L-homocysteine. The protein operates within cofactor biosynthesis; adenosylcobalamin biosynthesis; cob(II)yrinate a,c-diamide from sirohydrochlorin (anaerobic route): step 3/10. Functionally, methyltransferase that likely catalyzes the ring contraction and methylation of C-17 in cobalt-factor III to form cobalt-factor IV. May also convert cobalt-precorrin-3 to cobalt-precorrin-4. In Methanocaldococcus jannaschii (strain ATCC 43067 / DSM 2661 / JAL-1 / JCM 10045 / NBRC 100440) (Methanococcus jannaschii), this protein is Probable cobalt-factor III C(17)-methyltransferase (cbiH).